The sequence spans 196 residues: Holliday junction branch migration complex subunit RuvA (196 aa).

Positions 1-62 (MYEYINGLIT…ENDISLYGFI (62 aa)) are domain I. The tract at residues 63 to 141 (DADEKALFNK…ELASKTGMVD (79 aa)) is domain II. Positions 142 to 148 (SSSNPEQ) are flexible linker. The segment at 148-196 (QSQALDDALEALLALGYTAKDVKAVAQIIGRNSDTTDGYIRSALKLLVK) is domain III.

Belongs to the RuvA family. In terms of assembly, homotetramer. Forms an RuvA(8)-RuvB(12)-Holliday junction (HJ) complex. HJ DNA is sandwiched between 2 RuvA tetramers; dsDNA enters through RuvA and exits via RuvB. An RuvB hexamer assembles on each DNA strand where it exits the tetramer. Each RuvB hexamer is contacted by two RuvA subunits (via domain III) on 2 adjacent RuvB subunits; this complex drives branch migration. In the full resolvosome a probable DNA-RuvA(4)-RuvB(12)-RuvC(2) complex forms which resolves the HJ.

It is found in the cytoplasm. The RuvA-RuvB-RuvC complex processes Holliday junction (HJ) DNA during genetic recombination and DNA repair, while the RuvA-RuvB complex plays an important role in the rescue of blocked DNA replication forks via replication fork reversal (RFR). RuvA specifically binds to HJ cruciform DNA, conferring on it an open structure. The RuvB hexamer acts as an ATP-dependent pump, pulling dsDNA into and through the RuvAB complex. HJ branch migration allows RuvC to scan DNA until it finds its consensus sequence, where it cleaves and resolves the cruciform DNA. This is Holliday junction branch migration complex subunit RuvA from Leuconostoc mesenteroides subsp. mesenteroides (strain ATCC 8293 / DSM 20343 / BCRC 11652 / CCM 1803 / JCM 6124 / NCDO 523 / NBRC 100496 / NCIMB 8023 / NCTC 12954 / NRRL B-1118 / 37Y).